The following is a 310-amino-acid chain: Haloalkane dehalogenase (310 aa).

The AB hydrolase-1 domain maps to 30 to 140 (PVVLFLHGNP…PMPTWQDFHH (111 aa)). Asp-103 functions as the Nucleophile in the catalytic mechanism. Catalysis depends on Glu-127, which acts as the Proton donor. Residue His-280 is the Proton acceptor of the active site.

Belongs to the haloalkane dehalogenase family. Type 2 subfamily. As to quaternary structure, monomer.

It carries out the reaction 1-haloalkane + H2O = a halide anion + a primary alcohol + H(+). Its function is as follows. Catalyzes hydrolytic cleavage of carbon-halogen bonds in halogenated aliphatic compounds, leading to the formation of the corresponding primary alcohols, halide ions and protons. The protein is Haloalkane dehalogenase of Bradyrhizobium diazoefficiens (strain JCM 10833 / BCRC 13528 / IAM 13628 / NBRC 14792 / USDA 110).